A 366-amino-acid polypeptide reads, in one-letter code: Galactoside alpha-(1,2)-fucosyltransferase 1 (366 aa).

Topologically, residues 1 to 8 (MWPLSHRH) are cytoplasmic. Residues 9 to 25 (LCLAFLLVCVLSAISFF) form a helical; Signal-anchor for type II membrane protein membrane-spanning segment. Residues 26–366 (LHIHQDSIRH…LSPLWTLAEP (341 aa)) are Lumenal-facing. N-linked (GlcNAc...) asparagine glycosylation is found at Asn66, Asn302, and Asn328.

It belongs to the glycosyltransferase 11 family.

It is found in the golgi apparatus. The protein resides in the golgi stack membrane. The enzyme catalyses a beta-D-galactosyl-(1-&gt;4)-N-acetyl-beta-D-glucosaminyl derivative + GDP-beta-L-fucose = an alpha-L-Fuc-(1-&gt;2)-beta-D-Gal-(1-&gt;4)-beta-D-GlcNAc derivative + GDP + H(+). The catalysed reaction is a ganglioside GA1 + GDP-beta-L-fucose = a ganglioside Fuc-GA1 + GDP + H(+). It catalyses the reaction a beta-D-Gal-(1-&gt;3)-beta-D-GlcNAc-(1-&gt;3)-beta-D-Gal-(1-&gt;4)-beta-D-Glc-(1&lt;-&gt;1')-Cer(d18:1(4E)) + GDP-beta-L-fucose = alpha-L-fucosyl-(1-&gt;2)- beta-D-galactosyl-(1-&gt;3)-N-acetyl-beta-D-glucosaminyl-(1-&gt;3)-beta-D-galactosyl-(1-&gt;4)-beta-D-glucosyl-(1&lt;-&gt;1')-N-acylsphing-4-enine + GDP + H(+). It carries out the reaction a neolactoside nLc4Cer(d18:1(4E)) + GDP-beta-L-fucose = a neolactoside IV(2)-alpha-Fuc-nLc4Cer(d18:1(4E)) + GDP + H(+). The enzyme catalyses a ganglioside GM1 + GDP-beta-L-fucose = a ganglioside Fuc-GM1 + GDP + H(+). The catalysed reaction is beta-D-galactosyl-(1-&gt;3)-N-acetyl-D-galactosamine + GDP-beta-L-fucose = alpha-L-fucosyl-(1-&gt;2)-beta-D-galactosyl-(1-&gt;3)-N-acetyl-D-galactosamine + GDP + H(+). It functions in the pathway protein modification; protein glycosylation. Its function is as follows. Catalyzes the transfer of L-fucose, from a guanosine diphosphate-beta-L-fucose, to the terminal galactose residue of glycoconjugates through an alpha(1,2) linkage leading to H antigen synthesis that is an intermediate substrate in the synthesis of ABO blood group antigens. H antigen is essential for maturation of the glomerular layer of the main olfactory bulb, in cell migration and early cell-cell contacts during tumor associated angiogenesis. Preferentially fucosylates soluble lactose and to a lesser extent fucosylates glycolipids gangliosides GA1 and GM1a. In Aotus azarae (Azara's night monkey), this protein is Galactoside alpha-(1,2)-fucosyltransferase 1.